The chain runs to 72 residues: Sperm protein associated with the nucleus on the X chromosome N1 (72 aa).

The tract at residues 1–40 (MEKPTSSTNGEKRKSPCDSNSKNDEMQETPNRDLVLEPSL) is disordered. The segment covering 10-35 (GEKRKSPCDSNSKNDEMQETPNRDLV) has biased composition (basic and acidic residues).

The protein belongs to the SPAN-X family.

This Pan troglodytes (Chimpanzee) protein is Sperm protein associated with the nucleus on the X chromosome N1 (SPANXN1).